The sequence spans 129 residues: Large ribosomal subunit protein bL21 (129 aa).

A disordered region spans residues 100-129 (DGAKPSKKAAEKKAPKAAPKKAAAKAESAE).

This sequence belongs to the bacterial ribosomal protein bL21 family. As to quaternary structure, part of the 50S ribosomal subunit. Contacts protein L20.

Functionally, this protein binds to 23S rRNA in the presence of protein L20. The sequence is that of Large ribosomal subunit protein bL21 from Brucella anthropi (strain ATCC 49188 / DSM 6882 / CCUG 24695 / JCM 21032 / LMG 3331 / NBRC 15819 / NCTC 12168 / Alc 37) (Ochrobactrum anthropi).